A 479-amino-acid polypeptide reads, in one-letter code: Glutamyl-tRNA reductase (479 aa).

Residues 48–51 (TCNR), serine 104, 109–111 (ERQ), and glutamine 115 each bind substrate. Cysteine 49 (nucleophile) is an active-site residue. 189-194 (GAGKMG) is a binding site for NADP(+). The segment at 417–455 (DAGRSLAEAPDADTPDLGEAPSRCPYMTHDPGGDGTETE) is disordered.

This sequence belongs to the glutamyl-tRNA reductase family. In terms of assembly, homodimer.

It carries out the reaction (S)-4-amino-5-oxopentanoate + tRNA(Glu) + NADP(+) = L-glutamyl-tRNA(Glu) + NADPH + H(+). It functions in the pathway porphyrin-containing compound metabolism; protoporphyrin-IX biosynthesis; 5-aminolevulinate from L-glutamyl-tRNA(Glu): step 1/2. Catalyzes the NADPH-dependent reduction of glutamyl-tRNA(Glu) to glutamate 1-semialdehyde (GSA). This is Glutamyl-tRNA reductase from Salinibacter ruber (strain DSM 13855 / M31).